Reading from the N-terminus, the 218-residue chain is Probable transaldolase (218 aa).

The active-site Schiff-base intermediate with substrate is the K83.

This sequence belongs to the transaldolase family. Type 3B subfamily.

The protein localises to the cytoplasm. It carries out the reaction D-sedoheptulose 7-phosphate + D-glyceraldehyde 3-phosphate = D-erythrose 4-phosphate + beta-D-fructose 6-phosphate. It functions in the pathway carbohydrate degradation; pentose phosphate pathway; D-glyceraldehyde 3-phosphate and beta-D-fructose 6-phosphate from D-ribose 5-phosphate and D-xylulose 5-phosphate (non-oxidative stage): step 2/3. Its function is as follows. Transaldolase is important for the balance of metabolites in the pentose-phosphate pathway. This is Probable transaldolase from Thermotoga petrophila (strain ATCC BAA-488 / DSM 13995 / JCM 10881 / RKU-1).